The sequence spans 417 residues: Serine hydroxymethyltransferase 1 (417 aa).

(6S)-5,6,7,8-tetrahydrofolate-binding positions include L121 and 125 to 127 (GHL). K230 bears the N6-(pyridoxal phosphate)lysine mark. 355–357 (SPF) serves as a coordination point for (6S)-5,6,7,8-tetrahydrofolate.

Belongs to the SHMT family. Homodimer. Requires pyridoxal 5'-phosphate as cofactor.

The protein localises to the cytoplasm. It carries out the reaction (6R)-5,10-methylene-5,6,7,8-tetrahydrofolate + glycine + H2O = (6S)-5,6,7,8-tetrahydrofolate + L-serine. It participates in one-carbon metabolism; tetrahydrofolate interconversion. It functions in the pathway amino-acid biosynthesis; glycine biosynthesis; glycine from L-serine: step 1/1. Its function is as follows. Catalyzes the reversible interconversion of serine and glycine with tetrahydrofolate (THF) serving as the one-carbon carrier. This reaction serves as the major source of one-carbon groups required for the biosynthesis of purines, thymidylate, methionine, and other important biomolecules. Also exhibits THF-independent aldolase activity toward beta-hydroxyamino acids, producing glycine and aldehydes, via a retro-aldol mechanism. The chain is Serine hydroxymethyltransferase 1 from Pseudomonas syringae pv. tomato (strain ATCC BAA-871 / DC3000).